The chain runs to 483 residues: Glutamyl-tRNA(Gln) amidotransferase subunit A (483 aa).

Active-site charge relay system residues include K76 and S151. The Acyl-ester intermediate role is filled by S175.

Belongs to the amidase family. GatA subfamily. In terms of assembly, heterotrimer of A, B and C subunits.

The enzyme catalyses L-glutamyl-tRNA(Gln) + L-glutamine + ATP + H2O = L-glutaminyl-tRNA(Gln) + L-glutamate + ADP + phosphate + H(+). Functionally, allows the formation of correctly charged Gln-tRNA(Gln) through the transamidation of misacylated Glu-tRNA(Gln) in organisms which lack glutaminyl-tRNA synthetase. The reaction takes place in the presence of glutamine and ATP through an activated gamma-phospho-Glu-tRNA(Gln). This Pseudomonas putida (strain ATCC 47054 / DSM 6125 / CFBP 8728 / NCIMB 11950 / KT2440) protein is Glutamyl-tRNA(Gln) amidotransferase subunit A.